We begin with the raw amino-acid sequence, 199 residues long: uncharacterized protein (199 aa).

The disordered stretch occupies residues 1-41; sequence MKFKRDENQNSTHHRGNKNNTNNDDDDKEEEEEIINDTTMP. Over residues 23-35 the composition is skewed to acidic residues; it reads NDDDDKEEEEEII. Transmembrane regions (helical) follow at residues 73–93, 96–116, and 166–186; these read LILDLVGFFTQIIPIFGFAFW, ISTYLIFKVYGSGLHLCVSFL, and IAIAVALIAIYKIISYFSPYL.

The protein resides in the membrane. This is an uncharacterized protein from Dictyostelium discoideum (Social amoeba).